A 434-amino-acid polypeptide reads, in one-letter code: Urokinase-type plasminogen activator (434 aa).

Positions 1 to 20 (MKLIIFLTVTLCTLVTGLDS) are cleaved as a signal peptide. In terms of domain architecture, EGF-like spans 36-72 (QHRECQCLNGGTCITYRFFSQIKRCLCPEGYGGLHCE). 12 cysteine pairs are disulfide-bonded: cysteine 40–cysteine 48, cysteine 42–cysteine 60, cysteine 62–cysteine 71, cysteine 79–cysteine 158, cysteine 96–cysteine 139, cysteine 128–cysteine 152, cysteine 162–cysteine 296, cysteine 202–cysteine 218, cysteine 210–cysteine 285, cysteine 310–cysteine 379, cysteine 342–cysteine 358, and cysteine 369–cysteine 397. The Kringle domain maps to 79-158 (CYSGNGEDYR…ETPCSTIEKC (80 aa)). Residues 159–172 (ERTCGQRSFSKYFK) are connecting peptide. One can recognise a Peptidase S1 domain in the interval 173-421 (IVGGSQAEVE…YLNWIDSNMN (249 aa)). The active-site Charge relay system is the histidine 217. Asparagine 228 carries an N-linked (GlcNAc...) asparagine glycan. Aspartate 272 serves as the catalytic Charge relay system. Catalysis depends on serine 373, which acts as the Charge relay system.

The protein belongs to the peptidase S1 family.

It localises to the secreted. The catalysed reaction is Specific cleavage of Arg-|-Val bond in plasminogen to form plasmin.. Its function is as follows. Specifically cleaves the zymogen plasminogen to form the active enzyme plasmin. This chain is Urokinase-type plasminogen activator (PLAU), found in Gallus gallus (Chicken).